Here is a 317-residue protein sequence, read N- to C-terminus: Aspartate carbamoyltransferase catalytic subunit (317 aa).

Residues Arg65 and Thr66 each contribute to the carbamoyl phosphate site. Lys93 is an L-aspartate binding site. Carbamoyl phosphate is bound by residues Arg115, His145, and Gln148. Positions 178 and 233 each coordinate L-aspartate. 2 residues coordinate carbamoyl phosphate: Gly274 and Pro275.

It belongs to the aspartate/ornithine carbamoyltransferase superfamily. ATCase family. Heterododecamer (2C3:3R2) of six catalytic PyrB chains organized as two trimers (C3), and six regulatory PyrI chains organized as three dimers (R2).

The catalysed reaction is carbamoyl phosphate + L-aspartate = N-carbamoyl-L-aspartate + phosphate + H(+). The protein operates within pyrimidine metabolism; UMP biosynthesis via de novo pathway; (S)-dihydroorotate from bicarbonate: step 2/3. Functionally, catalyzes the condensation of carbamoyl phosphate and aspartate to form carbamoyl aspartate and inorganic phosphate, the committed step in the de novo pyrimidine nucleotide biosynthesis pathway. The polypeptide is Aspartate carbamoyltransferase catalytic subunit (Bordetella parapertussis (strain 12822 / ATCC BAA-587 / NCTC 13253)).